The chain runs to 66 residues: Cold shock protein 2 (66 aa).

Residues 4–63 form the CSD domain; the sequence is GTVKWFNADKGFGFITGEDGTDVFVHFSAIQTDGFKTLDEGQKVTYDEEQGDRGPQATNV.

It localises to the cytoplasm. This Lactiplantibacillus plantarum (strain ATCC BAA-793 / NCIMB 8826 / WCFS1) (Lactobacillus plantarum) protein is Cold shock protein 2 (cspL).